The sequence spans 257 residues: MTTPLYWQTEGEGSDLVLIHGWGMNGAVWQTTSEKLSQHYRVHTVDLSGYGHSAELGCADFDEMVKQVLAQAPKKAAWLGWSLGGLIATKAALTSPERVSQLITVASSPRFSAEKGWRGIKPLVLSQFTEQLKTDFTLTVERFMALQAMGSPNAKQDIKLVKKAVFSRPMPDQQALATGLMILADIDLREAVSQLSMPVCRMYGRLDGLVPIKVAHDMDELMPNSAKIVFEQASHAPFISHNDEFISELRTFLNQHA.

The region spanning 16–240 is the AB hydrolase-1 domain; that stretch reads LVLIHGWGMN…EQASHAPFIS (225 aa). Residues Trp-22, 82–83, and 143–147 each bind substrate; these read SL and FMALQ. Ser-82 (nucleophile) is an active-site residue. Catalysis depends on residues Asp-207 and His-235. Position 235 (His-235) interacts with substrate.

The protein belongs to the AB hydrolase superfamily. Carboxylesterase BioH family. As to quaternary structure, monomer.

The protein localises to the cytoplasm. The enzyme catalyses 6-carboxyhexanoyl-[ACP] methyl ester + H2O = 6-carboxyhexanoyl-[ACP] + methanol + H(+). It functions in the pathway cofactor biosynthesis; biotin biosynthesis. In terms of biological role, the physiological role of BioH is to remove the methyl group introduced by BioC when the pimeloyl moiety is complete. It allows to synthesize pimeloyl-ACP via the fatty acid synthetic pathway through the hydrolysis of the ester bonds of pimeloyl-ACP esters. The protein is Pimeloyl-[acyl-carrier protein] methyl ester esterase of Aliivibrio fischeri (strain ATCC 700601 / ES114) (Vibrio fischeri).